Consider the following 493-residue polypeptide: Alginate production protein AlgE (493 aa).

An N-terminal signal peptide occupies residues 1 to 25 (MKLNPLMAAGMGLGFTLFWACPTLA). A compositionally biased stretch (polar residues) spans 93 to 111 (DPLEQSNSDGSGTQTSRGT). The tract at residues 93 to 115 (DPLEQSNSDGSGTQTSRGTASER) is disordered.

Belongs to the AlgE family.

It is found in the cell outer membrane. The protein operates within glycan biosynthesis; alginate biosynthesis. Has non-porin-like, channel-forming properties and probably functions as an alginate permeability pore. The chain is Alginate production protein AlgE (algE) from Pseudomonas syringae pv. tomato (strain ATCC BAA-871 / DC3000).